The chain runs to 172 residues: Photosystem I assembly protein Ycf3 (172 aa).

3 TPR repeats span residues 35–68 (AFSY…EVDA), 72–105 (SYIL…NPSL), and 120–153 (GEQA…APTN).

It belongs to the Ycf3 family.

The protein localises to the plastid. It is found in the chloroplast thylakoid membrane. In terms of biological role, essential for the assembly of the photosystem I (PSI) complex. May act as a chaperone-like factor to guide the assembly of the PSI subunits. The protein is Photosystem I assembly protein Ycf3 of Chlamydomonas reinhardtii (Chlamydomonas smithii).